Reading from the N-terminus, the 181-residue chain is Large ribosomal subunit protein uL6 (181 aa).

This sequence belongs to the universal ribosomal protein uL6 family. Part of the 50S ribosomal subunit.

Its function is as follows. This protein binds to the 23S rRNA, and is important in its secondary structure. It is located near the subunit interface in the base of the L7/L12 stalk, and near the tRNA binding site of the peptidyltransferase center. The sequence is that of Large ribosomal subunit protein uL6 from Flavobacterium psychrophilum (strain ATCC 49511 / DSM 21280 / CIP 103535 / JIP02/86).